We begin with the raw amino-acid sequence, 136 residues long: Early E3 15.3 kDa protein (136 aa).

This sequence belongs to the adenoviridae E3_15 family.

Functionally, protects virus-infected cells from TNF-induced cytolysis. This chain is Early E3 15.3 kDa protein, found in Human adenovirus B serotype 3 (HAdV-3).